A 339-amino-acid polypeptide reads, in one-letter code: Fructose-1,6-bisphosphatase class 1 (339 aa).

Glu92, Asp114, Leu116, and Asp117 together coordinate Mg(2+). Residues 117 to 120 (DGSS), Asn213, and Lys279 each bind substrate. Glu285 is a Mg(2+) binding site.

The protein belongs to the FBPase class 1 family. As to quaternary structure, homotetramer. Mg(2+) serves as cofactor.

The protein resides in the cytoplasm. It catalyses the reaction beta-D-fructose 1,6-bisphosphate + H2O = beta-D-fructose 6-phosphate + phosphate. It functions in the pathway carbohydrate biosynthesis; gluconeogenesis. This chain is Fructose-1,6-bisphosphatase class 1, found in Acidovorax sp. (strain JS42).